Consider the following 391-residue polypeptide: Thyroid hormone receptor alpha-B (391 aa).

The tract at residues 1-32 (MAQWPEKEEEEQPMFGEEYTGYIPSYLEKDEP) is modulating. NR C4-type zinc fingers lie at residues 33-53 (CVVC…CEGC) and 71-95 (CKYD…FKKC). Positions 33–100 (CVVCGDKATG…RFKKCIAVGM (68 aa)) form a DNA-binding region, nuclear receptor. The region spanning 143–388 (AEWELIRMVT…PPLFLEVFED (246 aa)) is the NR LBD domain.

Belongs to the nuclear hormone receptor family. NR1 subfamily.

It is found in the nucleus. In terms of biological role, high affinity receptor for triiodothyronine. This is Thyroid hormone receptor alpha-B (thra2) from Paralichthys olivaceus (Bastard halibut).